The primary structure comprises 719 residues: Protein psiI (719 aa).

The first 19 residues, 1–19 (MKIIFNLLILFSLVNFINS), serve as a signal peptide directing secretion. Residues 20-658 (QSTTQATTLK…ICQTGAIVST (639 aa)) lie on the Extracellular side of the membrane. N-linked (GlcNAc...) asparagine glycans are attached at residues asparagine 62, asparagine 105, asparagine 118, asparagine 151, asparagine 315, asparagine 379, asparagine 454, asparagine 488, asparagine 500, asparagine 538, asparagine 592, and asparagine 629. The 143-residue stretch at 119 to 261 (LTLNPSTGTY…YDYCGVCYGD (143 aa)) folds into the PA14 domain. The helical transmembrane segment at 659–679 (AVVASVVVVGAVVLGAAIFAG) threads the bilayer. The Cytoplasmic segment spans residues 680–719 (KKGYDHWKANQGQVFASSNANPLYQQSNNGGENALFEAPQ).

Belongs to the prespore-cell-inducing factor family.

It is found in the membrane. The sequence is that of Protein psiI (psiI) from Dictyostelium discoideum (Social amoeba).